The following is a 1129-amino-acid chain: MLEEMQQMKTIPVLTNSRPEFKQIPKKLSRHLANLGGPHVDSFDEMLTVGLDNSAKHMIPNHWLSPAGEKISMKVESIWIAKPKVPQDVIDVRTREIYPTDSRQLHVSYSGMCSVRLGWSVNGVQKTPINMDLGEVPIMLRSKACNLGQATPEEMVKHGEHDSEWGGIFVIRGNEKIVRMLIMTRRNHPICVKRSSWKDRGQNFSDLGMLVQTVREDESSLSNVVHYLNNGTAKFMFSHVKRLSYVPVCLILKCLMDYTDEEIYNRLVQGYESDQYYVSCVQAMLREVQNENVYTHAQCKSFIGNLFRARFPEVPEWQPDDDVTDFILRERVMIHLDTYEDKFQLIVFMIQKLFQCAQGKYKVENVDSAMMQEVLLPGHLYQKYLSERVESWVSQVRRCLQKKLTSPDALVTSAVMTQCMRQAGGVGRAIESFLATGNIASRTGLGLMQNSGLVIMAENINRMRYMSHFRAIHRGSYFTTMRTTEARQLLPDAWGFICPVHTPDGTPCGLLNHLTLTCEISMRPDPKLVKAIPKHLIDMGMMPLSNRRYLGEKLYVVFLDGKHLGHIHQSEAEKIVDELRYGKIFGTLPQMMEIGFIPFKKNGQFPGLYIATGPARMMRPVWNLKWKRVEYIGTLEQLYMEIAIDAKEMYPDFTTHLELAKTHFMSNLANLIPMPDYNQSPRNMYQCQMGKQTMGTPCLNWPKQAANKLYRLQTPGTPLFRPVHYDNIQLDDFAMGTNAIVAVISYTGYDMEDAMIINKAAYERGFAYGSIYKTKFLTLDKKSSYFARHPHMPELIKHLDTDGLPHPGSKLSYGSPLYCYFDGEVATYKVVKMDEKEDCIVESIRQLGSFDLSPKKMVAITLRVPRPATIGDKFASRAGQKGICSQKYPAEDLPFTESGLIPDIVFNPHGFPSRMTIAMMIETMAGKGAAIHGNVYDATPFRFSEENTAIDYFGKMLEAGGYNYYGTERLYSGVDGREMTADIFFGVVHYQRLRHMVFDKWQVRSTGAVEARTHQPIKGRKRGGGVRFGEMERDALISHGAAFLLQDRLFHNSDKTHTLVCHKCGSILAPLQRIVKRNETGGLSSQPDTCRLCGDNSSVSMIEIPFSFKYLVTELSSVNINARFKLNEI.

The segment at 1061-1093 (CHKCGSILAPLQRIVKRNETGGLSSQPDTCRLC) adopts a C4-type zinc-finger fold.

Belongs to the RNA polymerase beta chain family. As to quaternary structure, component of the RNA polymerase I (Pol I) complex consisting of at least 13 subunits.

It is found in the nucleus. The protein localises to the nucleolus. The catalysed reaction is RNA(n) + a ribonucleoside 5'-triphosphate = RNA(n+1) + diphosphate. Functionally, DNA-dependent RNA polymerase catalyzes the transcription of DNA into RNA using the four ribonucleoside triphosphates as substrates. Second largest core component of RNA polymerase I which synthesizes ribosomal RNA precursors. Proposed to contribute to the polymerase catalytic activity and forms the polymerase active center together with the largest subunit. Pol I is composed of mobile elements and RPA2 is part of the core element with the central large cleft and probably a clamp element that moves to open and close the cleft. The chain is DNA-directed RNA polymerase I subunit RPA2 from Drosophila melanogaster (Fruit fly).